The following is a 210-amino-acid chain: Thymidylate kinase (210 aa).

Residue 10 to 17 coordinates ATP; the sequence is GLEGAGKS.

The protein belongs to the thymidylate kinase family.

It catalyses the reaction dTMP + ATP = dTDP + ADP. Its function is as follows. Phosphorylation of dTMP to form dTDP in both de novo and salvage pathways of dTTP synthesis. The protein is Thymidylate kinase of Hamiltonella defensa subsp. Acyrthosiphon pisum (strain 5AT).